Here is a 117-residue protein sequence, read N- to C-terminus: MATYSLANERLRALEDIEREIGAILQNAGTVILELSKEKTNERLLDRQAAAFTASVQHVEAELSAQIRYLTQVATGQPHEGSSYSSRKDCQMALKRVDYARLKLSDVARTCEQMLEN.

Ala2 carries the N-acetylalanine modification.

Belongs to the Mediator complex subunit 11 family. Component of the Mediator complex, which is composed of MED1, MED4, MED6, MED7, MED8, MED9, MED10, MED11, MED12, MED13, MED13L, MED14, MED15, MED16, MED17, MED18, MED19, MED20, MED21, MED22, MED23, MED24, MED25, MED26, MED27, MED29, MED30, MED31, CCNC, CDK8 and CDC2L6/CDK11. The MED12, MED13, CCNC and CDK8 subunits form a distinct module termed the CDK8 module. Mediator containing the CDK8 module is less active than Mediator lacking this module in supporting transcriptional activation. Individual preparations of the Mediator complex lacking one or more distinct subunits have been variously termed ARC, CRSP, DRIP, PC2, SMCC and TRAP.

The protein resides in the nucleus. Functionally, component of the Mediator complex, a coactivator involved in the regulated transcription of nearly all RNA polymerase II-dependent genes. Mediator functions as a bridge to convey information from gene-specific regulatory proteins to the basal RNA polymerase II transcription machinery. Mediator is recruited to promoters by direct interactions with regulatory proteins and serves as a scaffold for theee assembly of a functional pre-initiation complex with RNA polymerase II and the general transcription factors. This Homo sapiens (Human) protein is Mediator of RNA polymerase II transcription subunit 11 (MED11).